The sequence spans 400 residues: Nicotinate phosphoribosyltransferase (400 aa).

Residue His220 is modified to Phosphohistidine; by autocatalysis.

This sequence belongs to the NAPRTase family. In terms of processing, transiently phosphorylated on a His residue during the reaction cycle. Phosphorylation strongly increases the affinity for substrates and increases the rate of nicotinate D-ribonucleotide production. Dephosphorylation regenerates the low-affinity form of the enzyme, leading to product release.

It carries out the reaction nicotinate + 5-phospho-alpha-D-ribose 1-diphosphate + ATP + H2O = nicotinate beta-D-ribonucleotide + ADP + phosphate + diphosphate. Its pathway is cofactor biosynthesis; NAD(+) biosynthesis; nicotinate D-ribonucleotide from nicotinate: step 1/1. Its function is as follows. Catalyzes the synthesis of beta-nicotinate D-ribonucleotide from nicotinate and 5-phospho-D-ribose 1-phosphate at the expense of ATP. This Shigella sonnei (strain Ss046) protein is Nicotinate phosphoribosyltransferase.